A 213-amino-acid chain; its full sequence is Pyrrolidone-carboxylate peptidase (213 aa).

Catalysis depends on residues Glu-78, Cys-141, and His-165.

This sequence belongs to the peptidase C15 family. Homotetramer.

The protein resides in the cytoplasm. It catalyses the reaction Release of an N-terminal pyroglutamyl group from a polypeptide, the second amino acid generally not being Pro.. Its function is as follows. Removes 5-oxoproline from various penultimate amino acid residues except L-proline. The protein is Pyrrolidone-carboxylate peptidase of Clostridium perfringens (strain 13 / Type A).